Consider the following 147-residue polypeptide: Methylglyoxal synthase (147 aa).

Residues 4–147 form the MGS-like domain; it reads VSVPATKRIA…LLNFELLCES (144 aa). Residues His-17, Lys-21, 43-46, and 63-64 contribute to the substrate site; these read TGTT and SG. Catalysis depends on Asp-69, which acts as the Proton donor/acceptor. His-96 lines the substrate pocket.

It belongs to the methylglyoxal synthase family.

The catalysed reaction is dihydroxyacetone phosphate = methylglyoxal + phosphate. Its function is as follows. Catalyzes the formation of methylglyoxal from dihydroxyacetone phosphate. The sequence is that of Methylglyoxal synthase from Leptospira borgpetersenii serovar Hardjo-bovis (strain JB197).